Consider the following 96-residue polypeptide: UPF0213 protein Lreu_0682 (96 aa).

The 78-residue stretch at 4 to 81 folds into the GIY-YIG domain; the sequence is EKYYIYVLYC…KHQTRRQKEK (78 aa).

The protein belongs to the UPF0213 family.

This chain is UPF0213 protein Lreu_0682, found in Limosilactobacillus reuteri (strain DSM 20016) (Lactobacillus reuteri).